A 95-amino-acid chain; its full sequence is Aspartyl/glutamyl-tRNA(Asn/Gln) amidotransferase subunit C (95 aa).

The protein belongs to the GatC family. In terms of assembly, heterotrimer of A, B and C subunits.

It carries out the reaction L-glutamyl-tRNA(Gln) + L-glutamine + ATP + H2O = L-glutaminyl-tRNA(Gln) + L-glutamate + ADP + phosphate + H(+). It catalyses the reaction L-aspartyl-tRNA(Asn) + L-glutamine + ATP + H2O = L-asparaginyl-tRNA(Asn) + L-glutamate + ADP + phosphate + 2 H(+). Allows the formation of correctly charged Asn-tRNA(Asn) or Gln-tRNA(Gln) through the transamidation of misacylated Asp-tRNA(Asn) or Glu-tRNA(Gln) in organisms which lack either or both of asparaginyl-tRNA or glutaminyl-tRNA synthetases. The reaction takes place in the presence of glutamine and ATP through an activated phospho-Asp-tRNA(Asn) or phospho-Glu-tRNA(Gln). In Campylobacter concisus (strain 13826), this protein is Aspartyl/glutamyl-tRNA(Asn/Gln) amidotransferase subunit C.